Consider the following 170-residue polypeptide: RNA pyrophosphohydrolase (170 aa).

In terms of domain architecture, Nudix hydrolase spans 6 to 150 (GFRPNVGIIL…KRDVYRRALR (145 aa)). Positions 39-60 (GGINAHESPEQALYRELHEEVG) match the Nudix box motif.

Belongs to the Nudix hydrolase family. RppH subfamily. A divalent metal cation is required as a cofactor.

In terms of biological role, accelerates the degradation of transcripts by removing pyrophosphate from the 5'-end of triphosphorylated RNA, leading to a more labile monophosphorylated state that can stimulate subsequent ribonuclease cleavage. The polypeptide is RNA pyrophosphohydrolase (Cellvibrio japonicus (strain Ueda107) (Pseudomonas fluorescens subsp. cellulosa)).